The primary structure comprises 211 residues: DELTA-stichotoxin-Hmg2a (211 aa).

A signal peptide spans 1 to 19 (MNRLIVLFLIVTMICATIA). The propeptide occupies 20 to 34 (VPSREELEDQKEYKR). The segment at 37-46 (ALAGTIIEGA) is plays an important role in the hemolytic activity. Positions 45-64 (GASLGFQILDKVLGELGKVS) are N-terminal region. Phosphocholine-binding residues include Ser88, Val121, Ser139, Pro141, Tyr167, Tyr171, and Tyr172. The trp-rich region, which is important for the binding to lipid membrane stretch occupies residues 139-154 (SVPFDYNFYSNWWDVK). A Cell attachment site, crucial for protein stability motif is present at residues 177–179 (RGD).

The protein belongs to the actinoporin family. Sea anemone subfamily. Octamer or nonamer in membranes. Monomer in the soluble state.

It is found in the secreted. The protein localises to the nematocyst. Its subcellular location is the target cell membrane. Functionally, pore-forming protein that forms cations-selective hydrophilic pores of around 1 nm and causes cardiac stimulation and cytolysis. Pore formation is a multi-step process that involves specific recognition of membrane sphingomyelin (but neither cholesterol nor phosphatidylcholine) using aromatic rich region and adjacent phosphocholine (POC) binding site, firm binding to the membrane (mainly driven by hydrophobic interactions) accompanied by the transfer of the N-terminal region to the lipid-water interface and finally pore formation after oligomerization of monomers. The protein is DELTA-stichotoxin-Hmg2a of Heteractis magnifica (Magnificent sea anemone).